An 858-amino-acid chain; its full sequence is Piwi-like protein 1 (858 aa).

Over residues 1–13 (MTGRARARSRGRG) the composition is skewed to basic residues. The disordered stretch occupies residues 1-56 (MTGRARARSRGRGRGQEPAAPGAQPPVSQEAAKPVVSTPSEGQLVGRGRQKPAPGA). Residues 16-26 (QEPAAPGAQPP) are compositionally biased toward low complexity. The 113-residue stretch at 276-388 (TVLDFMYSLR…LVPEFCYLTG (113 aa)) folds into the PAZ domain. The required for binding 2'-O-methylated 3'-end of piRNAs stretch occupies residues 314-316 (TYR). The segment at 476 to 612 (SKEMRGLPLI…LQMNCKMGGE (137 aa)) is MID region. The region spanning 552-844 (MVVVILPTNR…LAFLVGQSIH (293 aa)) is the Piwi domain. Active-site residues include D629, E667, D699, and H833.

It belongs to the argonaute family. Piwi subfamily. It depends on Mg(2+) as a cofactor. Post-translationally, methylated on arginine residues; required for the interaction with Tudor domain-containing protein and subsequent localization to the meiotic nuage, also named P granule. As to expression, expressed exclusively in the adult gonads; expression in the ovary weaker than in the testis (at protein level). During neurogenesis and organogenesis, expression is detected in CNS (midbrain and eye) and fin buds. Starting from 24 hours post-fertilization, expression is found in the genital ridge.

The protein resides in the cytoplasm. Plays a central role during gametogenesis by repressing transposable elements and preventing their mobilization, which is essential for the germline integrity. Acts via the piRNA metabolic process, which mediates the repression of transposable elements during meiosis by forming complexes composed of piRNAs and Piwi proteins and governs the methylation and subsequent repression of transposons. Directly binds methylated piRNAs, a class of 24 to 30 nucleotide RNAs that are generated by a Dicer-independent mechanism and are primarily derived from transposons and other repeated sequence elements. Has a strong preference for piRNAs with a uridine nucleotide at their 5'-end (g1U preference, also named 1U-bias) and binds piRNAs in an opposite direction compared to piwil2/zili. Participates in a piRNA amplification loop with piwil2/zili. Not involved in the piRNA amplification loop, also named ping-pong amplification cycle. Acts as an endoribonuclease that cleaves transposon messenger RNAs. This chain is Piwi-like protein 1 (piwil1), found in Danio rerio (Zebrafish).